The chain runs to 176 residues: ATP-dependent protease subunit HslV (176 aa).

The active site involves Thr-5. Na(+) contacts are provided by Ser-161, Cys-164, and Thr-167.

The protein belongs to the peptidase T1B family. HslV subfamily. A double ring-shaped homohexamer of HslV is capped on each side by a ring-shaped HslU homohexamer. The assembly of the HslU/HslV complex is dependent on binding of ATP.

It localises to the cytoplasm. The enzyme catalyses ATP-dependent cleavage of peptide bonds with broad specificity.. With respect to regulation, allosterically activated by HslU binding. Functionally, protease subunit of a proteasome-like degradation complex believed to be a general protein degrading machinery. The protein is ATP-dependent protease subunit HslV of Desulfitobacterium hafniense (strain DSM 10664 / DCB-2).